Reading from the N-terminus, the 365-residue chain is Flagellar P-ring protein (365 aa).

Residues 1 to 19 form the signal peptide; that stretch reads MFKALAGIVLALVATLAHA.

Belongs to the FlgI family. As to quaternary structure, the basal body constitutes a major portion of the flagellar organelle and consists of four rings (L,P,S, and M) mounted on a central rod.

The protein localises to the periplasm. It localises to the bacterial flagellum basal body. Its function is as follows. Assembles around the rod to form the L-ring and probably protects the motor/basal body from shearing forces during rotation. In Salmonella heidelberg (strain SL476), this protein is Flagellar P-ring protein.